The following is a 243-amino-acid chain: 7-cyano-7-deazaguanine synthase (243 aa).

18–28 (FSGGQDSATCL) contributes to the ATP binding site. Residues C206, C221, C224, and C227 each coordinate Zn(2+).

The protein belongs to the QueC family. Zn(2+) is required as a cofactor.

The catalysed reaction is 7-carboxy-7-deazaguanine + NH4(+) + ATP = 7-cyano-7-deazaguanine + ADP + phosphate + H2O + H(+). It functions in the pathway purine metabolism; 7-cyano-7-deazaguanine biosynthesis. Catalyzes the ATP-dependent conversion of 7-carboxy-7-deazaguanine (CDG) to 7-cyano-7-deazaguanine (preQ(0)). This is 7-cyano-7-deazaguanine synthase from Maricaulis maris (strain MCS10) (Caulobacter maris).